The following is a 679-amino-acid chain: DNA ligase (679 aa).

Residues 36-40 and 94-95 each bind NAD(+); these read DEYYD and SL. Lys126 functions as the N6-AMP-lysine intermediate in the catalytic mechanism. NAD(+) contacts are provided by Arg147, Glu181, Lys299, and Lys323. Cys415, Cys418, Cys433, and Cys438 together coordinate Zn(2+). In terms of domain architecture, BRCT spans 603-679; the sequence is IQSTKLENKT…DEEFLKKMLE (77 aa).

It belongs to the NAD-dependent DNA ligase family. LigA subfamily. Requires Mg(2+) as cofactor. Mn(2+) is required as a cofactor.

The enzyme catalyses NAD(+) + (deoxyribonucleotide)n-3'-hydroxyl + 5'-phospho-(deoxyribonucleotide)m = (deoxyribonucleotide)n+m + AMP + beta-nicotinamide D-nucleotide.. Its function is as follows. DNA ligase that catalyzes the formation of phosphodiester linkages between 5'-phosphoryl and 3'-hydroxyl groups in double-stranded DNA using NAD as a coenzyme and as the energy source for the reaction. It is essential for DNA replication and repair of damaged DNA. The polypeptide is DNA ligase (Mycoplasmopsis pulmonis (strain UAB CTIP) (Mycoplasma pulmonis)).